A 146-amino-acid polypeptide reads, in one-letter code: ATP synthase F(0) complex subunit C2, mitochondrial (146 aa).

Residues 1–71 (MYACSKFVST…RSFQTSAISR (71 aa)) constitute a mitochondrion transit peptide. The chain crosses the membrane as a helical span at residues 87-107 (VGVAGSGAGIGTVFGSLIIGY). Lys114 is modified (N6,N6,N6-trimethyllysine). The helical transmembrane segment at 122–142 (ILGFALSEAMGLFCLMVAFLI) threads the bilayer.

Belongs to the ATPase C chain family. F-type ATPases have 2 components, CF(1) - the catalytic core - and CF(0) - the membrane proton channel. CF(1) has five subunits: alpha(3), beta(3), gamma(1), delta(1), epsilon(1). CF(0) has three main subunits: a, b and c. Interacts with DNAJC30; interaction is direct. In terms of processing, trimethylated by ATPSCKMT at Lys-114. Methylation is required for proper incorporation of the C subunit into the ATP synthase complex and mitochondrial respiration.

It localises to the mitochondrion membrane. In terms of biological role, mitochondrial membrane ATP synthase (F(1)F(0) ATP synthase or Complex V) produces ATP from ADP in the presence of a proton gradient across the membrane which is generated by electron transport complexes of the respiratory chain. F-type ATPases consist of two structural domains, F(1) - containing the extramembraneous catalytic core and F(0) - containing the membrane proton channel, linked together by a central stalk and a peripheral stalk. During catalysis, ATP synthesis in the catalytic domain of F(1) is coupled via a rotary mechanism of the central stalk subunits to proton translocation. Part of the complex F(0) domain. A homomeric c-ring of probably 10 subunits is part of the complex rotary element. This Mus musculus (Mouse) protein is ATP synthase F(0) complex subunit C2, mitochondrial.